We begin with the raw amino-acid sequence, 76 residues long: UPF0291 protein MW2494 (76 aa).

Belongs to the UPF0291 family.

The protein localises to the cytoplasm. The polypeptide is UPF0291 protein MW2494 (Staphylococcus aureus (strain MW2)).